A 211-amino-acid polypeptide reads, in one-letter code: Outer surface protein C (211 aa).

The first 18 residues, 1–18 (MKKNTLSAILMTLFLFIS), serve as a signal peptide directing secretion. The N-palmitoyl cysteine moiety is linked to residue cysteine 19. Cysteine 19 carries the S-diacylglycerol cysteine lipid modification.

The protein belongs to the OspC lipoprotein family. As to quaternary structure, homodimer. Interacts with tick I.ricinus salivary protein Iric-1, Iric-2 and Iric-3. Binds human (host) plasminogen.

It localises to the cell outer membrane. Its subcellular location is the cell surface. In terms of biological role, major immunodominant protein in mammalian hosts. Required for initial stages of mammalian infection. Inhibits macrophage-mediated phagocytosis of the bacteria. Binds human plasminogen; this probably confers an extracellular protease activity on the bacteria that allows it to traverse tissue. Interaction with tick I.ricinus salivary protein Salp15 protects the bacteria from antibody-mediated killing in vitro and in vivo. The sequence is that of Outer surface protein C from Borreliella burgdorferi (Lyme disease spirochete).